A 606-amino-acid chain; its full sequence is Fructan 6-exohydrolase (606 aa).

The N-terminal stretch at 1–21 (MAPNNGSWLVLSISMMLLSHG) is a signal peptide. A glycan (N-linked (GlcNAc...) asparagine) is linked at asparagine 5. Aspartate 70 is a catalytic residue. 5 N-linked (GlcNAc...) asparagine glycosylation sites follow: asparagine 110, asparagine 164, asparagine 193, asparagine 237, and asparagine 346. Cysteine 445 and cysteine 491 are disulfide-bonded. Asparagine 564, asparagine 585, asparagine 590, and asparagine 593 each carry an N-linked (GlcNAc...) asparagine glycan.

It belongs to the glycosyl hydrolase 32 family.

The catalysed reaction is Hydrolysis of terminal, non-reducing (2-&gt;6)-linked beta-D-fructofuranose residues in fructans.. With respect to regulation, not inhibited by sucrose. In terms of biological role, hydrolyzes levan-type beta-(2-&gt;6)-linked fructans to fructose, but not inulin-type beta-(2-&gt;1)-linked fructans. In Beta vulgaris (Sugar beet), this protein is Fructan 6-exohydrolase.